The chain runs to 322 residues: tRNA dimethylallyltransferase (322 aa).

21-28 (GQTAVGKT) is an ATP binding site. 23 to 28 (TAVGKT) is a substrate binding site. Positions 46-49 (DSGC) are interaction with substrate tRNA.

This sequence belongs to the IPP transferase family. Monomer. It depends on Mg(2+) as a cofactor.

The catalysed reaction is adenosine(37) in tRNA + dimethylallyl diphosphate = N(6)-dimethylallyladenosine(37) in tRNA + diphosphate. Functionally, catalyzes the transfer of a dimethylallyl group onto the adenine at position 37 in tRNAs that read codons beginning with uridine, leading to the formation of N6-(dimethylallyl)adenosine (i(6)A). The sequence is that of tRNA dimethylallyltransferase from Wigglesworthia glossinidia brevipalpis.